Reading from the N-terminus, the 317-residue chain is Ornithine carbamoyltransferase (317 aa).

Carbamoyl phosphate contacts are provided by residues 57 to 60 (STRT), Gln84, Arg108, and 135 to 138 (HPCQ). Residues Asn166, Asp230, and 234–235 (SM) each bind L-ornithine. Carbamoyl phosphate-binding positions include 270–271 (CL) and Arg298.

It belongs to the aspartate/ornithine carbamoyltransferase superfamily. OTCase family. Homododecamer.

The protein localises to the cytoplasm. The catalysed reaction is carbamoyl phosphate + L-ornithine = L-citrulline + phosphate + H(+). It functions in the pathway amino-acid biosynthesis; L-arginine biosynthesis; L-arginine from L-ornithine and carbamoyl phosphate: step 1/3. In terms of biological role, reversibly catalyzes the transfer of the carbamoyl group from carbamoyl phosphate (CP) to the N(epsilon) atom of ornithine (ORN) to produce L-citrulline. This Pyrococcus abyssi (strain GE5 / Orsay) protein is Ornithine carbamoyltransferase.